Reading from the N-terminus, the 243-residue chain is Terpene cyclase dpmaB (243 aa).

6 helical membrane passes run 11 to 31 (PGYL…GLGW), 51 to 71 (ALMP…IYPF), 112 to 132 (LPFI…ALAL), 141 to 161 (AFSA…QLLS), 169 to 189 (SYFL…QDVL), and 207 to 227 (IWFV…LWYV).

It belongs to the paxB family.

It localises to the membrane. It participates in secondary metabolite biosynthesis; terpenoid biosynthesis. Functionally, terpene cyclase; part of the gene cluster that mediates the biosynthesis of the diterpenoid pyrones subglutinols A and B. The first step of the pathway is the synthesis of the alpha-pyrone moiety by the polyketide synthase dpmaA via condensation of one acetyl-CoA starter unit with 3 malonyl-CoA units and 2 methylations. The alpha-pyrone is then combined with geranylgeranyl pyrophosphate (GGPP) formed by the GGPP synthase dpmaD through the action of the prenyltransferase dpmaC to yield a linear alpha-pyrone diterpenoid. Subsequent steps in the diterpenoid pyrone biosynthetic pathway involve the decalin core formation, which is initiated by the epoxidation of the C10-C11 olefin by the FAD-dependent oxidoreductase dpmaE, and is followed by a cyclization cascade catalyzed by the terpene cyclase dpmaB. The dehydrogenase dpmaF is then involved in tetrahydrofuran (THF) ring formation at the C5 unit to complete the formation of subglutinols A and B. The sequence is that of Terpene cyclase dpmaB from Metarhizium anisopliae (Entomophthora anisopliae).